A 108-amino-acid polypeptide reads, in one-letter code: Movement protein TGB2 (108 aa).

The Cytoplasmic portion of the chain corresponds to M1 to N8. A helical transmembrane segment spans residues Y9–F29. Residues T30–N72 are Lumenal-facing. A helical membrane pass occupies residues Y73–G93. The Cytoplasmic segment spans residues R94 to A108.

It belongs to the Tymovirales TGBp2 protein family.

It localises to the host endoplasmic reticulum membrane. Plays a role in viral cell-to-cell propagation, by facilitating genome transport to neighboring plant cells through plasmosdesmata,. The protein is Movement protein TGB2 of Solanum tuberosum (Potato).